The sequence spans 191 residues: Ribosome maturation factor RimP (191 aa).

Belongs to the RimP family.

It localises to the cytoplasm. Its function is as follows. Required for maturation of 30S ribosomal subunits. This chain is Ribosome maturation factor RimP, found in Caulobacter vibrioides (strain NA1000 / CB15N) (Caulobacter crescentus).